Here is a 401-residue protein sequence, read N- to C-terminus: Tyrosine--tRNA ligase (401 aa).

The 'HIGH' region motif lies at 41-50 (PSRPDLHLGH). Residues 225–229 (KMSKS) carry the 'KMSKS' region motif. Residue lysine 228 participates in ATP binding. Positions 334–395 (KNIVDLLVEI…GKRKFYRISG (62 aa)) constitute an S4 RNA-binding domain.

Belongs to the class-I aminoacyl-tRNA synthetase family. TyrS type 2 subfamily. Homodimer.

The protein localises to the cytoplasm. The catalysed reaction is tRNA(Tyr) + L-tyrosine + ATP = L-tyrosyl-tRNA(Tyr) + AMP + diphosphate + H(+). Functionally, catalyzes the attachment of tyrosine to tRNA(Tyr) in a two-step reaction: tyrosine is first activated by ATP to form Tyr-AMP and then transferred to the acceptor end of tRNA(Tyr). The protein is Tyrosine--tRNA ligase of Thermotoga maritima (strain ATCC 43589 / DSM 3109 / JCM 10099 / NBRC 100826 / MSB8).